The following is a 204-amino-acid chain: Glutathione S-transferase (204 aa).

The 78-residue stretch at 3 to 80 (PSYKLTYCPV…YLGKQFGLSG (78 aa)) folds into the GST N-terminal domain. Residues Tyr9, Trp40, Lys44, 50–52 (GKT), and 64–65 (QS) contribute to the glutathione site. Residues 82 to 204 (DDWENLEIDM…WVAKRPPTDL (123 aa)) enclose the GST C-terminal domain.

This sequence belongs to the GST superfamily. Sigma family.

It catalyses the reaction RX + glutathione = an S-substituted glutathione + a halide anion + H(+). The polypeptide is Glutathione S-transferase (Blattella germanica (German cockroach)).